The primary structure comprises 151 residues: Mini-ribonuclease 3 (151 aa).

Asp-28 is an active-site residue.

The protein belongs to the MrnC RNase family. Homodimer. Mg(2+) serves as cofactor.

Its subcellular location is the cytoplasm. Involved in correct processing of both the 5' and 3' ends of 23S rRNA precursor. Processes 30S rRNA precursor transcript even in absence of ribonuclease 3 (Rnc); Rnc processes 30S rRNA into smaller rRNA precursors. The protein is Mini-ribonuclease 3 of Clostridium tetani (strain Massachusetts / E88).